Here is a 118-residue protein sequence, read N- to C-terminus: Ribonuclease P protein component (118 aa).

It belongs to the RnpA family. In terms of assembly, consists of a catalytic RNA component (M1 or rnpB) and a protein subunit.

The enzyme catalyses Endonucleolytic cleavage of RNA, removing 5'-extranucleotides from tRNA precursor.. RNaseP catalyzes the removal of the 5'-leader sequence from pre-tRNA to produce the mature 5'-terminus. It can also cleave other RNA substrates such as 4.5S RNA. The protein component plays an auxiliary but essential role in vivo by binding to the 5'-leader sequence and broadening the substrate specificity of the ribozyme. The chain is Ribonuclease P protein component from Petrotoga mobilis (strain DSM 10674 / SJ95).